The chain runs to 681 residues: DNA ligase (681 aa).

NAD(+) contacts are provided by residues 35–39 (DAEYD), 84–85 (SI), and E121. K123 acts as the N6-AMP-lysine intermediate in catalysis. Residues R144, E180, K300, and K324 each coordinate NAD(+). Residues C418, C421, C436, and C442 each contribute to the Zn(2+) site. In terms of domain architecture, BRCT spans 601 to 681 (AADGPASGKT…GLRRLLEQPA (81 aa)).

It belongs to the NAD-dependent DNA ligase family. LigA subfamily. The cofactor is Mg(2+). Mn(2+) is required as a cofactor.

The catalysed reaction is NAD(+) + (deoxyribonucleotide)n-3'-hydroxyl + 5'-phospho-(deoxyribonucleotide)m = (deoxyribonucleotide)n+m + AMP + beta-nicotinamide D-nucleotide.. DNA ligase that catalyzes the formation of phosphodiester linkages between 5'-phosphoryl and 3'-hydroxyl groups in double-stranded DNA using NAD as a coenzyme and as the energy source for the reaction. It is essential for DNA replication and repair of damaged DNA. This chain is DNA ligase, found in Aromatoleum aromaticum (strain DSM 19018 / LMG 30748 / EbN1) (Azoarcus sp. (strain EbN1)).